A 257-amino-acid chain; its full sequence is Tryptophan synthase alpha chain (257 aa).

Active-site proton acceptor residues include E51 and D62.

This sequence belongs to the TrpA family. In terms of assembly, tetramer of two alpha and two beta chains.

The catalysed reaction is (1S,2R)-1-C-(indol-3-yl)glycerol 3-phosphate + L-serine = D-glyceraldehyde 3-phosphate + L-tryptophan + H2O. The protein operates within amino-acid biosynthesis; L-tryptophan biosynthesis; L-tryptophan from chorismate: step 5/5. Its function is as follows. The alpha subunit is responsible for the aldol cleavage of indoleglycerol phosphate to indole and glyceraldehyde 3-phosphate. The protein is Tryptophan synthase alpha chain of Nitratidesulfovibrio vulgaris (strain ATCC 29579 / DSM 644 / CCUG 34227 / NCIMB 8303 / VKM B-1760 / Hildenborough) (Desulfovibrio vulgaris).